Here is a 245-residue protein sequence, read N- to C-terminus: 1-(5-phosphoribosyl)-5-[(5-phosphoribosylamino)methylideneamino] imidazole-4-carboxamide isomerase (245 aa).

D15 functions as the Proton acceptor in the catalytic mechanism. The Proton donor role is filled by D135.

This sequence belongs to the HisA/HisF family.

The protein resides in the cytoplasm. It catalyses the reaction 1-(5-phospho-beta-D-ribosyl)-5-[(5-phospho-beta-D-ribosylamino)methylideneamino]imidazole-4-carboxamide = 5-[(5-phospho-1-deoxy-D-ribulos-1-ylimino)methylamino]-1-(5-phospho-beta-D-ribosyl)imidazole-4-carboxamide. It participates in amino-acid biosynthesis; L-histidine biosynthesis; L-histidine from 5-phospho-alpha-D-ribose 1-diphosphate: step 4/9. This chain is 1-(5-phosphoribosyl)-5-[(5-phosphoribosylamino)methylideneamino] imidazole-4-carboxamide isomerase, found in Haloquadratum walsbyi (strain DSM 16790 / HBSQ001).